Consider the following 405-residue polypeptide: Nicotinate phosphoribosyltransferase (405 aa).

Histidine 224 is modified (phosphohistidine; by autocatalysis).

The protein belongs to the NAPRTase family. Transiently phosphorylated on a His residue during the reaction cycle. Phosphorylation strongly increases the affinity for substrates and increases the rate of nicotinate D-ribonucleotide production. Dephosphorylation regenerates the low-affinity form of the enzyme, leading to product release.

The enzyme catalyses nicotinate + 5-phospho-alpha-D-ribose 1-diphosphate + ATP + H2O = nicotinate beta-D-ribonucleotide + ADP + phosphate + diphosphate. It functions in the pathway cofactor biosynthesis; NAD(+) biosynthesis; nicotinate D-ribonucleotide from nicotinate: step 1/1. Functionally, catalyzes the synthesis of beta-nicotinate D-ribonucleotide from nicotinate and 5-phospho-D-ribose 1-phosphate at the expense of ATP. This chain is Nicotinate phosphoribosyltransferase, found in Methanococcoides burtonii (strain DSM 6242 / NBRC 107633 / OCM 468 / ACE-M).